We begin with the raw amino-acid sequence, 245 residues long: Bis(5'-nucleosyl)-tetraphosphatase PrpE [asymmetrical] (245 aa).

It belongs to the PrpE family. Requires Ni(2+) as cofactor.

The catalysed reaction is P(1),P(4)-bis(5'-guanosyl) tetraphosphate + H2O = GMP + GTP + 2 H(+). Asymmetrically hydrolyzes Ap4p to yield AMP and ATP. This is Bis(5'-nucleosyl)-tetraphosphatase PrpE [asymmetrical] from Anoxybacillus flavithermus (strain DSM 21510 / WK1).